A 434-amino-acid polypeptide reads, in one-letter code: MTHAAIDQALADAYRRFTDANPASQRQFEAQARYMPGANSRSVLFYAPFPLTIARGEGAALWDADGHRYADFIAEYTAGVYGHSAPEIRDAVIEAMQGGINLTGHNLLEGRLARLICERFPQIEQLRFTNSGTEANLMALTAALHFTGRRKIVVFSGGYHGGVLGFGARPSPTTVPFDFLVLPYNDAQTARAQIERHGPEIAVVLVEPMQGASGCIPGQPDFLQALRESATQVGALLVFDEVMTSRLAPHGLANKLGIRSDLTTLGKYIGGGMSFGAFGGRADVMALFDPRTGPLAHSGTFNNNVMTMAAGYAGLTKLFTPEAAGALAERGEALRARLNALCANEGVAMQFTGIGSLMNAHFVQGDVRSSEDLAAVDGRLRQLLFFHLLNEDIYSSPRGFVVLSLPLTDADIDRYVAAIGSFIGGHGALLPRAN.

Residue Arg41 participates in (S)-3-amino-3-phenylpropanoate binding. 132–133 (GT) provides a ligand contact to pyridoxal 5'-phosphate. Lys267 bears the N6-(pyridoxal phosphate)lysine mark. Position 300 (Thr300) interacts with pyridoxal 5'-phosphate.

It belongs to the class-III pyridoxal-phosphate-dependent aminotransferase family. In terms of assembly, homodimer. Pyridoxal 5'-phosphate is required as a cofactor.

It catalyses the reaction (S)-3-amino-3-phenylpropanoate + 2-oxoglutarate = 3-oxo-3-phenylpropanoate + L-glutamate. The catalysed reaction is (S)-3-amino-3-phenylpropanoate + pyruvate = 3-oxo-3-phenylpropanoate + L-alanine. Its activity is regulated as follows. Is inhibited by 2-aminooxyacetate (AOA), a mimic of beta-alanine and a known inhibitor of aminotransferases. Functionally, aminotransferase that acts exclusively on beta-amino acids and exhibits a broad substrate range in vitro, accepting meta-, para- and, to a lesser extent, ortho-substituted beta-phenylalanine derivatives as amino donors, and 2-oxoglutarate or pyruvate as amino acceptors. Is highly enantioselective toward (S)-beta-phenylalanine (is not active with (R)-beta-phenylalanine) and derivatives with different substituents on the phenyl ring, allowing the kinetic resolution of various racemic beta-amino acids to yield (R)-beta-amino acids with &gt;95% enantiomeric excess (ee). Highly prefers aromatic beta-amino acids over aliphatic beta-amino acids; cannot use beta-alanine or beta-glutamate as substrate. Is likely involved in the beta-phenylalanine degradation pathway that allows V.paradoxus strain CBF3 to use beta-phenylalanine as a sole nitrogen source. The sequence is that of Beta-phenylalanine transaminase from Variovorax paradoxus.